We begin with the raw amino-acid sequence, 107 residues long: Metallothionein-1 (107 aa).

The propeptide occupies 1-2 (MD).

This sequence belongs to the metallothionein superfamily. Type 7 family.

Its function is as follows. The metallothioneins are involved in the cellular sequestration of toxic metal ions. Binds 12 cadmium ions per molecule. The polypeptide is Metallothionein-1 (Tetrahymena pigmentosa).